A 328-amino-acid chain; its full sequence is Mannitol-1-phosphate 5-dehydrogenase (328 aa).

3 to 14 is a binding site for NAD(+); it reads LIHFGAGNIGCG.

This sequence belongs to the mannitol dehydrogenase family.

It catalyses the reaction D-mannitol 1-phosphate + NAD(+) = beta-D-fructose 6-phosphate + NADH + H(+). The chain is Mannitol-1-phosphate 5-dehydrogenase (mtlD) from Mycoplasma mycoides subsp. mycoides SC (strain CCUG 32753 / NCTC 10114 / PG1).